A 66-amino-acid chain; its full sequence is uncharacterized protein (66 aa).

Positions 1–19 (MRRLYRHLASFFLLPSCPG) are cleaved as a signal peptide.

This is an uncharacterized protein from Saccharomyces cerevisiae (strain ATCC 204508 / S288c) (Baker's yeast).